Reading from the N-terminus, the 322-residue chain is 4-hydroxythreonine-4-phosphate dehydrogenase (322 aa).

His-126 and Thr-127 together coordinate substrate. A divalent metal cation contacts are provided by His-160, His-205, and His-260. Lys-268, Asn-277, and Arg-286 together coordinate substrate.

It belongs to the PdxA family. Homodimer. Requires Zn(2+) as cofactor. The cofactor is Mg(2+). Co(2+) is required as a cofactor.

Its subcellular location is the cytoplasm. The catalysed reaction is 4-(phosphooxy)-L-threonine + NAD(+) = 3-amino-2-oxopropyl phosphate + CO2 + NADH. It functions in the pathway cofactor biosynthesis; pyridoxine 5'-phosphate biosynthesis; pyridoxine 5'-phosphate from D-erythrose 4-phosphate: step 4/5. In terms of biological role, catalyzes the NAD(P)-dependent oxidation of 4-(phosphooxy)-L-threonine (HTP) into 2-amino-3-oxo-4-(phosphooxy)butyric acid which spontaneously decarboxylates to form 3-amino-2-oxopropyl phosphate (AHAP). The polypeptide is 4-hydroxythreonine-4-phosphate dehydrogenase (Paracoccus denitrificans (strain Pd 1222)).